The following is a 592-amino-acid chain: ATP-binding protein Uup (592 aa).

2 ABC transporter domains span residues 1-221 (MPLI…RIEK) and 289-516 (FKLK…KSNI). ATP is bound by residues 36 to 43 (GKNGAGKS) and 321 to 328 (GNNGSGKS). The stretch at 516-550 (ISFLKTKQNQVKKELKKVLNEIEKIENSIKTLKIQ) forms a coiled coil. A C-terminal domain (CTD), binds DNA region spans residues 518-592 (FLKTKQNQVK…IYWENLEKKL (75 aa)).

Belongs to the ABC transporter superfamily. ABCF family. Uup subfamily.

Its subcellular location is the cytoplasm. The catalysed reaction is ATP + H2O = ADP + phosphate + H(+). Functionally, probably plays a role in ribosome assembly or function. May be involved in resolution of branched DNA intermediates that result from template switching in postreplication gaps. Binds DNA and has ATPase activity. This Buchnera aphidicola subsp. Schizaphis graminum (strain Sg) protein is ATP-binding protein Uup.